The primary structure comprises 88 residues: Large ribosomal subunit protein bL27 (88 aa).

The interval 1 to 25 is disordered; that stretch reads MAHKKGASSSRNGRDSNAQRLGVKR. A compositionally biased stretch (polar residues) spans 7 to 19; the sequence is ASSSRNGRDSNAQ.

It belongs to the bacterial ribosomal protein bL27 family.

This chain is Large ribosomal subunit protein bL27, found in Nocardia farcinica (strain IFM 10152).